A 372-amino-acid chain; its full sequence is F-box/kelch-repeat protein At2g44630 (372 aa).

The span at 1 to 13 shows a compositional bias: polar residues; sequence MSNADEPPQKTNQ. The interval 1-21 is disordered; it reads MSNADEPPQKTNQPPSSSLTP. Positions 21–67 constitute an F-box domain; sequence PPSLFSLPVDIVLNILALVPKRYYPILCCVSKSLRSLIRSPEIHKTR. Kelch repeat units lie at residues 136–181 and 183–228; these read EIYC…LVGG and IYVI…SVSL.

This Arabidopsis thaliana (Mouse-ear cress) protein is F-box/kelch-repeat protein At2g44630.